Reading from the N-terminus, the 216-residue chain is uncharacterized protein (216 aa).

A helical transmembrane segment spans residues 5-22; it reads LGLVFGSVILIYLISLFL.

It is found in the membrane. This is an uncharacterized protein from Aquifex aeolicus (strain VF5).